A 748-amino-acid polypeptide reads, in one-letter code: Malate synthase G (748 aa).

Acetyl-CoA-binding positions include Val141, 148-149, Ser298, and Arg335; that span reads RF. The active-site Proton acceptor is the Arg362. Glyoxylate is bound by residues Arg362, Glu453, and 478-481; that span reads GFLD. The Mg(2+) site is built by Glu453 and Asp481. Pro562 contacts acetyl-CoA. Residue Cys639 is modified to Cysteine sulfenic acid (-SOH). Asp653 serves as the catalytic Proton donor.

This sequence belongs to the malate synthase family. GlcB subfamily. In terms of assembly, monomer. Mg(2+) is required as a cofactor.

It localises to the cytoplasm. It carries out the reaction glyoxylate + acetyl-CoA + H2O = (S)-malate + CoA + H(+). The protein operates within carbohydrate metabolism; glyoxylate cycle; (S)-malate from isocitrate: step 2/2. Its function is as follows. Involved in the glycolate utilization. Catalyzes the condensation and subsequent hydrolysis of acetyl-coenzyme A (acetyl-CoA) and glyoxylate to form malate and CoA. The protein is Malate synthase G of Corynebacterium efficiens (strain DSM 44549 / YS-314 / AJ 12310 / JCM 11189 / NBRC 100395).